Here is a 637-residue protein sequence, read N- to C-terminus: Probable potassium transport system protein Kup (637 aa).

Helical transmembrane passes span 24–44 (LAIA…LYAL), 64–84 (VISL…LLFV), 113–133 (AGAL…DAVI), 151–171 (PHLS…LFWI), 182–202 (LFGP…VYHI), 225–245 (LLQA…AEAL), 261–281 (AYGL…ALLI), 290–310 (PFFL…STVA), 351–371 (IYVP…VIGF), 381–401 (YGIA…VVMV), 409–429 (LLVG…FGAN), and 433–453 (VAQG…LLMT).

The protein belongs to the HAK/KUP transporter (TC 2.A.72) family.

The protein localises to the cell inner membrane. It carries out the reaction K(+)(in) + H(+)(in) = K(+)(out) + H(+)(out). Its function is as follows. Transport of potassium into the cell. Likely operates as a K(+):H(+) symporter. In Burkholderia ambifaria (strain MC40-6), this protein is Probable potassium transport system protein Kup.